Consider the following 293-residue polypeptide: Probable porphobilinogen deaminase (293 aa).

At C233 the chain carries S-(dipyrrolylmethanemethyl)cysteine.

The protein belongs to the HMBS family. It depends on dipyrromethane as a cofactor.

The enzyme catalyses 4 porphobilinogen + H2O = hydroxymethylbilane + 4 NH4(+). It functions in the pathway porphyrin-containing compound metabolism; protoporphyrin-IX biosynthesis; coproporphyrinogen-III from 5-aminolevulinate: step 2/4. Functionally, tetrapolymerization of the monopyrrole PBG into the hydroxymethylbilane pre-uroporphyrinogen in several discrete steps. The protein is Probable porphobilinogen deaminase of Saccharolobus islandicus (strain Y.G.57.14 / Yellowstone #1) (Sulfolobus islandicus).